A 262-amino-acid polypeptide reads, in one-letter code: Phosphomannomutase 1 (262 aa).

Ala-2 is modified (N-acetylalanine). Asp-19 acts as the Nucleophile in catalysis. Asp-19 and Asp-21 together coordinate Mg(2+). The Proton donor/acceptor role is filled by Asp-21. Alpha-D-mannose 1-phosphate is bound by residues Arg-28, Arg-132, Arg-143, Arg-150, Met-186, Ser-188, and Asp-190. Residues Asn-218, Tyr-230, Asp-232, and Thr-235 each coordinate Mg(2+). Ser-242 is modified (phosphoserine).

Belongs to the eukaryotic PMM family. In terms of assembly, homodimer. Mg(2+) is required as a cofactor. As to expression, present in brain, where it is restricted to neuronal cell bodies. Present at lower levels in pancreas, liver, lung, gonads, uterus, adrenal glands and pituitary (at protein level). Undetectable in intestine.

It localises to the cytoplasm. The catalysed reaction is alpha-D-mannose 1-phosphate = D-mannose 6-phosphate. It functions in the pathway nucleotide-sugar biosynthesis; GDP-alpha-D-mannose biosynthesis; alpha-D-mannose 1-phosphate from D-fructose 6-phosphate: step 2/2. IMP, a metabolite whose concentration is elevated in anoxia, inhibits phosphomannomutase and phosphoglucomutase activities and strongly enhances glucose-1,6-bisphosphatase activity. Functionally, involved in the synthesis of the GDP-mannose and dolichol-phosphate-mannose required for a number of critical mannosyl transfer reactions. In addition, may be responsible for the degradation of glucose-1,6-bisphosphate in ischemic brain. The protein is Phosphomannomutase 1 (Pmm1) of Mus musculus (Mouse).